A 105-amino-acid chain; its full sequence is uncharacterized protein (105 aa).

The helical transmembrane segment at Leu13–Ile35 threads the bilayer.

It localises to the membrane. This is an uncharacterized protein from Archaeoglobus fulgidus (strain ATCC 49558 / DSM 4304 / JCM 9628 / NBRC 100126 / VC-16).